The primary structure comprises 97 residues: YcgL domain-containing protein Maqu_1609 (97 aa).

In terms of domain architecture, YcgL spans 5–89 (EFVSVFRSSK…EQDTYIVDFK (85 aa)).

The chain is YcgL domain-containing protein Maqu_1609 from Marinobacter nauticus (strain ATCC 700491 / DSM 11845 / VT8) (Marinobacter aquaeolei).